A 785-amino-acid chain; its full sequence is Probable serine protease Ga0098714_109514 (785 aa).

Basic and acidic residues-rich tracts occupy residues 470-481 (LDHGKNGREGGR) and 491-501 (DGPEHPNHYAD). 2 disordered regions span residues 470–503 (LDHGKNGREGGRDVSAGPHGSDGPEHPNHYADID) and 608–629 (DGDASRTVTRHHPRTGEDEEVS).

Belongs to the peptidase S1 family.

Probably a dedicated protease for substrate gasdermin bGSDM; cleaves the bGSDM precursor, releasing the pore-forming moiety, which integrates into the membrane and triggers cell death. Involved in defense against bacteriophages. Expression of gasdermin bGSDM and this neighboring protease is toxic in E.coli on solid medium. This is Probable serine protease Ga0098714_109514 from Bradyrhizobium tropiciagri.